The chain runs to 90 residues: Leech factor Xa inhibitor (90 aa).

It is found in the secreted. Its function is as follows. Potent anticoagulant inhibiting the amidolytic activity of factor Xa (F10) (Ki=4nM) and reducing its ability to activate prothrombin (F2) in the prothrombinase complex (EC(50)=40nM). This chain is Leech factor Xa inhibitor, found in Haementeria depressa (Leech).